Here is a 236-residue protein sequence, read N- to C-terminus: Ubiquitin carboxyl-terminal hydrolase YUH1 (236 aa).

The UCH catalytic domain occupies 7 to 233; that stretch reads AVVPIESNPE…LNFAMLGLGP (227 aa). The interaction with ubiquitin stretch occupies residues 10-15; sequence PIESNP. The Nucleophile role is filled by Cys90. An interaction with ubiquitin region spans residues 149–157; sequence FSTGQSEAP. His166 acts as the Proton donor in catalysis. Positions 219-228 are interaction with ubiquitin; sequence NEEDVLNFAM.

The protein belongs to the peptidase C12 family.

The enzyme catalyses Thiol-dependent hydrolysis of ester, thioester, amide, peptide and isopeptide bonds formed by the C-terminal Gly of ubiquitin (a 76-residue protein attached to proteins as an intracellular targeting signal).. Functionally, deubiquitinating enzyme (DUB) that controls levels of cellular ubiquitin through processing of ubiquitin precursors and ubiquitinated proteins. Thiol protease that recognizes and hydrolyzes a peptide bond at the C-terminal glycine of either ubiquitin or RUB1. Preferentially cleaves ubiquitin from peptides and small adducts. This Saccharomyces cerevisiae (strain ATCC 204508 / S288c) (Baker's yeast) protein is Ubiquitin carboxyl-terminal hydrolase YUH1 (YUH1).